We begin with the raw amino-acid sequence, 381 residues long: Protein TRIGALACTOSYLDIACYLGLYCEROL 2, chloroplastic (381 aa).

The transit peptide at 1-45 directs the protein to the chloroplast; that stretch reads MIGNPVIQVPSSLMPSSSMIACPRVSPNGVPYLPPKPRTRHLVVR. Over 46–96 the chain is Stromal; it reads AASNSDAAHGQPSSDGGKNPLTVVLDVPRNIWRQTLKPLSDFGFGKRSIWE. A helical membrane pass occupies residues 97–117; that stretch reads GGVGLFIVSGATLLALSWAWL. Topologically, residues 118–381 are chloroplast intermembrane; it reads RGFQMRSKFR…LLIKSLSRLL (264 aa).

As to quaternary structure, homomultimer. Substrate-binding subunit of the TGD complex, a lipid translocator at the inner chloroplast envelope membrane made of TGD1, TGD2 and TGD3. Interacts with TGD1 and TGD3 with an overall subunit stoichiometry of 2 TGD1, 2 TGD3 and 8 to 12 TGD2. Interacts with TGD5.

It localises to the plastid. It is found in the chloroplast inner membrane. Component of a phosphatidic acid/lipid transport complex in the chloroplast envelope. Specifically binds phosphatidic acid (PA). Involved in lipid transfer from the endoplasmic reticulum (ER) to plastids, and necessary for thylakoids formation. In Arabidopsis thaliana (Mouse-ear cress), this protein is Protein TRIGALACTOSYLDIACYLGLYCEROL 2, chloroplastic.